The chain runs to 173 residues: Protein GrpE (173 aa).

The protein belongs to the GrpE family. As to quaternary structure, homodimer.

The protein localises to the cytoplasm. In terms of biological role, participates actively in the response to hyperosmotic and heat shock by preventing the aggregation of stress-denatured proteins, in association with DnaK and GrpE. It is the nucleotide exchange factor for DnaK and may function as a thermosensor. Unfolded proteins bind initially to DnaJ; upon interaction with the DnaJ-bound protein, DnaK hydrolyzes its bound ATP, resulting in the formation of a stable complex. GrpE releases ADP from DnaK; ATP binding to DnaK triggers the release of the substrate protein, thus completing the reaction cycle. Several rounds of ATP-dependent interactions between DnaJ, DnaK and GrpE are required for fully efficient folding. In Campylobacter fetus subsp. fetus (strain 82-40), this protein is Protein GrpE.